Reading from the N-terminus, the 808-residue chain is Phenylalanine--tRNA ligase beta subunit (808 aa).

Positions 40-149 (RPELDFVKIV…DQAEVGKTIR (110 aa)) constitute a tRNA-binding domain. Residues 407 to 484 (HKEVRIHTDI…RTKGYDTIQV (78 aa)) form the B5 domain. Positions 462, 468, 471, and 472 each coordinate Mg(2+). In terms of domain architecture, FDX-ACB spans 716 to 808 (SQFPEAEIDL…LAGKNGFVLR (93 aa)).

Belongs to the phenylalanyl-tRNA synthetase beta subunit family. Type 1 subfamily. Tetramer of two alpha and two beta subunits. It depends on Mg(2+) as a cofactor.

It is found in the cytoplasm. The enzyme catalyses tRNA(Phe) + L-phenylalanine + ATP = L-phenylalanyl-tRNA(Phe) + AMP + diphosphate + H(+). This is Phenylalanine--tRNA ligase beta subunit from Leptospira interrogans serogroup Icterohaemorrhagiae serovar copenhageni (strain Fiocruz L1-130).